Reading from the N-terminus, the 310-residue chain is Major allergen Asp f 2 (310 aa).

An N-terminal signal peptide occupies residues 1-16; sequence MAALLRLAVLLPLAAP. 4 N-linked (GlcNAc...) asparagine glycosylation sites follow: Asn57, Asn87, Asn143, and Asn216. The interval 247-310 is disordered; the sequence is AGESHGPDQG…THEGGQLHCT (64 aa). A compositionally biased stretch (low complexity) spans 258–292; that stretch reads DTGSASAPASTSTSSSSSGSGSGATTTPTDSPSAT. Basic and acidic residues predominate over residues 300 to 310; sequence HTHEGGQLHCT.

It belongs to the ZPS1 family.

It is found in the secreted. This chain is Major allergen Asp f 2, found in Aspergillus fumigatus (strain ATCC MYA-4609 / CBS 101355 / FGSC A1100 / Af293) (Neosartorya fumigata).